The chain runs to 264 residues: 3-methyl-2-oxobutanoate hydroxymethyltransferase (264 aa).

Asp45 and Asp84 together coordinate Mg(2+). Residues 45 to 46 (DS), Asp84, and Lys112 each bind 3-methyl-2-oxobutanoate. Residue Glu114 coordinates Mg(2+). Glu181 functions as the Proton acceptor in the catalytic mechanism.

Belongs to the PanB family. Homodecamer; pentamer of dimers. Requires Mg(2+) as cofactor.

The protein resides in the cytoplasm. The enzyme catalyses 3-methyl-2-oxobutanoate + (6R)-5,10-methylene-5,6,7,8-tetrahydrofolate + H2O = 2-dehydropantoate + (6S)-5,6,7,8-tetrahydrofolate. The protein operates within cofactor biosynthesis; (R)-pantothenate biosynthesis; (R)-pantoate from 3-methyl-2-oxobutanoate: step 1/2. Catalyzes the reversible reaction in which hydroxymethyl group from 5,10-methylenetetrahydrofolate is transferred onto alpha-ketoisovalerate to form ketopantoate. The protein is 3-methyl-2-oxobutanoate hydroxymethyltransferase of Shewanella loihica (strain ATCC BAA-1088 / PV-4).